Reading from the N-terminus, the 249-residue chain is Esterase YjfP (249 aa).

Its function is as follows. Displays esterase activity toward palmitoyl-CoA and pNP-butyrate. This is Esterase YjfP (yjfP) from Escherichia coli (strain K12).